A 323-amino-acid chain; its full sequence is Elongation factor P--(R)-beta-lysine ligase (323 aa).

76–78 (SPE) is a binding site for substrate. ATP is bound by residues 100-102 (RNE) and N109. Residue Y118 participates in substrate binding. 242-243 (EL) provides a ligand contact to ATP. Residue E249 participates in substrate binding. G298 is an ATP binding site.

This sequence belongs to the class-II aminoacyl-tRNA synthetase family. EpmA subfamily. Homodimer.

It carries out the reaction D-beta-lysine + L-lysyl-[protein] + ATP = N(6)-((3R)-3,6-diaminohexanoyl)-L-lysyl-[protein] + AMP + diphosphate + H(+). In terms of biological role, with EpmB is involved in the beta-lysylation step of the post-translational modification of translation elongation factor P (EF-P). Catalyzes the ATP-dependent activation of (R)-beta-lysine produced by EpmB, forming a lysyl-adenylate, from which the beta-lysyl moiety is then transferred to the epsilon-amino group of a conserved specific lysine residue in EF-P. This Pasteurella multocida (strain Pm70) protein is Elongation factor P--(R)-beta-lysine ligase.